Here is a 294-residue protein sequence, read N- to C-terminus: Small ribosomal subunit protein uS2 (294 aa).

This sequence belongs to the universal ribosomal protein uS2 family.

The chain is Small ribosomal subunit protein uS2 (rpsB) from Mycoplasma pneumoniae (strain ATCC 29342 / M129 / Subtype 1) (Mycoplasmoides pneumoniae).